Here is a 155-residue protein sequence, read N- to C-terminus: Ribonuclease H (155 aa).

In terms of domain architecture, RNase H type-1 spans 1–142 (MLKQVEIFTD…CDELARAAAM (142 aa)). Mg(2+) is bound by residues aspartate 10, glutamate 48, aspartate 70, and aspartate 134.

Belongs to the RNase H family. As to quaternary structure, monomer. Mg(2+) is required as a cofactor.

It is found in the cytoplasm. It carries out the reaction Endonucleolytic cleavage to 5'-phosphomonoester.. Endonuclease that specifically degrades the RNA of RNA-DNA hybrids. This chain is Ribonuclease H, found in Salmonella paratyphi A (strain AKU_12601).